The primary structure comprises 209 residues: Response regulator protein VraR (209 aa).

A Response regulatory domain is found at 4–120 (KVLFVDDHEM…DIAEAIRKTY (117 aa)). The residue at position 55 (D55) is a 4-aspartylphosphate. The 66-residue stretch at 141–206 (RAELYEMLTE…QAVIYAFQHN (66 aa)) folds into the HTH luxR-type domain. Residues 165–184 (NQEIASASHITIKTVKTHVS) constitute a DNA-binding region (H-T-H motif).

Phosphorylated by VraS.

The protein localises to the cytoplasm. Member of the two-component regulatory system VraS/VraR involved in the control of the cell wall peptidoglycan biosynthesis. The protein is Response regulator protein VraR (vraR) of Staphylococcus saprophyticus subsp. saprophyticus (strain ATCC 15305 / DSM 20229 / NCIMB 8711 / NCTC 7292 / S-41).